A 121-amino-acid chain; its full sequence is Holo-[acyl-carrier-protein] synthase (121 aa).

2 residues coordinate Mg(2+): Asp-5 and Glu-50.

Belongs to the P-Pant transferase superfamily. AcpS family. It depends on Mg(2+) as a cofactor.

Its subcellular location is the cytoplasm. The catalysed reaction is apo-[ACP] + CoA = holo-[ACP] + adenosine 3',5'-bisphosphate + H(+). Functionally, transfers the 4'-phosphopantetheine moiety from coenzyme A to a Ser of acyl-carrier-protein. This is Holo-[acyl-carrier-protein] synthase from Sulfurimonas denitrificans (strain ATCC 33889 / DSM 1251) (Thiomicrospira denitrificans (strain ATCC 33889 / DSM 1251)).